A 77-amino-acid polypeptide reads, in one-letter code: U-actitoxin-Avd12a (77 aa).

An N-terminal signal peptide occupies residues 1 to 23 (MALFRMLFLCAVLVLLTSKEGMS). Positions 24 to 29 (YEEPEN) are excised as a propeptide. Residues 31–73 (EGVACTGQYAESFCLNGGTCRYIQSIGEYYCICNGDYTGHRCE) form the EGF-like domain. Cystine bridges form between Cys-35–Cys-50, Cys-44–Cys-61, and Cys-63–Cys-72.

The protein belongs to the EGF domain peptide family.

It localises to the secreted. The protein resides in the nematocyst. Functionally, has both toxic and EGF activity. Its EGF activity consists of rounding cells (morphological change) and inducing tyrosine phosphorylation of the EGFR in A431 cells, but with a lower potency that human EGF. In Anemonia viridis (Snakelocks anemone), this protein is U-actitoxin-Avd12a.